A 315-amino-acid polypeptide reads, in one-letter code: Olfactory receptor 10A4 (315 aa).

Over 1–26 the chain is Extracellular; it reads MMWENWTIVSEFVLVSFSALSTELQA. A glycan (N-linked (GlcNAc...) asparagine) is linked at Asn5. The chain crosses the membrane as a helical span at residues 27–47; it reads LLFLLFLTIYLVTLMGNVLII. Residues 48-55 lie on the Cytoplasmic side of the membrane; it reads LVTIADSA. A helical transmembrane segment spans residues 56-76; the sequence is LQSPMYFFLRNLSFLEIGFNL. At 77–100 the chain is on the extracellular side; the sequence is VIVPKMLGTLIIQDTTISFLGCAT. An intrachain disulfide couples Cys98 to Cys190. The chain crosses the membrane as a helical span at residues 101–121; it reads QMYFFFFFGAAECCLLATMAY. Residues 122-140 are Cytoplasmic-facing; that stretch reads DRYVAICDPLHYPVIMGHI. Residues 141–161 traverse the membrane as a helical segment; sequence SCAQLAAASWFSGFSVATVQT. At 162–198 the chain is on the extracellular side; it reads TWIFSFPFCGPNRVNHFFCDSPPVIALVCADTSVFEL. A helical transmembrane segment spans residues 199–218; that stretch reads EALTATVLFILFPFLLILGS. Topologically, residues 219–238 are cytoplasmic; it reads YVRILSTIFRMPSAEGKHQA. Residues 239-259 traverse the membrane as a helical segment; that stretch reads FSTCSAHLLVVSLFYSTAILT. The Extracellular portion of the chain corresponds to 260 to 272; sequence YFRPQSSASSESK. The chain crosses the membrane as a helical span at residues 273–293; the sequence is KLLSLSSTVVTPMLNPIIYSS. Over 294-315 the chain is Cytoplasmic; it reads RNKEVKAALKRLIHRTLGSQKL.

The protein belongs to the G-protein coupled receptor 1 family. As to expression, expressed in the tongue.

It is found in the cell membrane. Odorant receptor (Potential). May be involved in taste perception. The protein is Olfactory receptor 10A4 (OR10A4) of Homo sapiens (Human).